Consider the following 454-residue polypeptide: Cobyrinate a,c-diamide synthase (454 aa).

The GATase cobBQ-type domain occupies 247–442 (KIGIAMDSAF…IHAHWASNPN (196 aa)). Residue Cys329 is the Nucleophile of the active site.

The protein belongs to the CobB/CbiA family. Requires Mg(2+) as cofactor.

It catalyses the reaction cob(II)yrinate + 2 L-glutamine + 2 ATP + 2 H2O = cob(II)yrinate a,c diamide + 2 L-glutamate + 2 ADP + 2 phosphate + 2 H(+). It participates in cofactor biosynthesis; adenosylcobalamin biosynthesis; cob(II)yrinate a,c-diamide from sirohydrochlorin (anaerobic route): step 10/10. Functionally, catalyzes the ATP-dependent amidation of the two carboxylate groups at positions a and c of cobyrinate, using either L-glutamine or ammonia as the nitrogen source. This is Cobyrinate a,c-diamide synthase from Leptospira interrogans serogroup Icterohaemorrhagiae serovar Lai (strain 56601).